The following is an 804-amino-acid chain: Phosphatidylinositol 4-kinase beta (804 aa).

One can recognise a PIK helical domain in the interval 55-245 (LEKVKMIHGS…GTKLRKLILS (191 aa)). Disordered stretches follow at residues 69–122 (LDKV…ARRR) and 251–309 (AHKK…EPVR). Composition is skewed to polar residues over residues 91–103 (KLTN…TSSR) and 281–300 (DATV…SNPK). The PI3K/PI4K catalytic domain maps to 523 to 789 (EPWEEKVRRI…MVDGSMRSIT (267 aa)). Residues 529-535 (VRRIREG) form a G-loop region. A catalytic loop region spans residues 656-664 (QVKDRHNGN). Residues 675-699 (HIDFGFILSSSPRNLGFETSAFKLT) form an activation loop region.

The protein belongs to the PI3/PI4-kinase family. Type III PI4K subfamily. It depends on Mg(2+) as a cofactor. The cofactor is Mn(2+).

It is found in the endomembrane system. It localises to the mitochondrion outer membrane. Its subcellular location is the rough endoplasmic reticulum membrane. The enzyme catalyses a 1,2-diacyl-sn-glycero-3-phospho-(1D-myo-inositol) + ATP = a 1,2-diacyl-sn-glycero-3-phospho-(1D-myo-inositol 4-phosphate) + ADP + H(+). In terms of biological role, phosphorylates phosphatidylinositol (PI) in the first committed step in the production of the second messenger inositol-1,4,5,-trisphosphate (PIP). May play an important role in the inner ear development. In Xenopus laevis (African clawed frog), this protein is Phosphatidylinositol 4-kinase beta (pi4kb).